A 426-amino-acid polypeptide reads, in one-letter code: D-tagatose-1,6-bisphosphate aldolase subunit KbaZ (426 aa).

The protein belongs to the GatZ/KbaZ family. KbaZ subfamily. Forms a complex with KbaY.

The protein operates within carbohydrate metabolism; D-tagatose 6-phosphate degradation; D-glyceraldehyde 3-phosphate and glycerone phosphate from D-tagatose 6-phosphate: step 2/2. In terms of biological role, component of the tagatose-1,6-bisphosphate aldolase KbaYZ that is required for full activity and stability of the Y subunit. Could have a chaperone-like function for the proper and stable folding of KbaY. When expressed alone, KbaZ does not show any aldolase activity. The polypeptide is D-tagatose-1,6-bisphosphate aldolase subunit KbaZ (Escherichia coli O127:H6 (strain E2348/69 / EPEC)).